A 404-amino-acid chain; its full sequence is Chorismate synthase (404 aa).

2 residues coordinate NADP(+): R40 and R46. Residues 133–135 (RSS), 266–267 (QA), G313, 328–332 (KPIPT), and R354 each bind FMN. Residues 283–320 (PGSQVHDPIEPREDGAQAYPRRTNHAGGTEGGTTTGMP) form a disordered region. A disordered region spans residues 337–357 (LDSVDTATGEPEPTRYERSDI).

Belongs to the chorismate synthase family. Homotetramer. FMNH2 serves as cofactor.

The enzyme catalyses 5-O-(1-carboxyvinyl)-3-phosphoshikimate = chorismate + phosphate. It functions in the pathway metabolic intermediate biosynthesis; chorismate biosynthesis; chorismate from D-erythrose 4-phosphate and phosphoenolpyruvate: step 7/7. In terms of biological role, catalyzes the anti-1,4-elimination of the C-3 phosphate and the C-6 proR hydrogen from 5-enolpyruvylshikimate-3-phosphate (EPSP) to yield chorismate, which is the branch point compound that serves as the starting substrate for the three terminal pathways of aromatic amino acid biosynthesis. This reaction introduces a second double bond into the aromatic ring system. In Salinibacter ruber (strain DSM 13855 / M31), this protein is Chorismate synthase.